The sequence spans 534 residues: tRNA uridine(34) acetyltransferase (534 aa).

The radical S-adenosyl-L-methionine (rSAM) stretch occupies residues 70–330; the sequence is KPVRTISGVA…GEFKPYREEE (261 aa). In terms of domain architecture, Radical SAM core spans 73–344; it reads RTISGVAVVA…ISYAKSIMPK (272 aa). The [4Fe-4S] cluster site is built by Cys90, Cys95, and Cys98. Lys150 lines the acetyl-CoA pocket. Cys384 and Cys389 form a disulfide bridge. The N-acetyltransferase domain occupies 387–534; that stretch reads IRCREVGHVY…RVGAYMGKEL (148 aa). Residues 461–464, 485–487, and Tyr518 each bind acetyl-CoA; these read QLHV and YGR.

The protein belongs to the ELP3 family. The cofactor is [4Fe-4S] cluster.

The enzyme catalyses uridine(34) in tRNA + acetyl-CoA + S-adenosyl-L-methionine + H2O = 5-(carboxymethyl)uridine(34) in tRNA + 5'-deoxyadenosine + L-methionine + CoA + 2 H(+). It participates in tRNA modification. Functionally, tRNA uridine(34) acetyltransferase, which mediates formation of carboxymethyluridine in the wobble base at position 34 in tRNAs. The proposed mechanism is the following: (i) recruits S-adenosyl-L-methionine and cleaves it to generate a 5'-deoxyadenosine radical (5'-dA) in the radical S-adenosyl-L-methionine (rSAM) region, (ii) hydrolyzes acetyl-CoA in the N-acetyltransferase domain and (iii) an acetyl radical is formed by the products of the two domains and (iv) is transferred onto the C5 position of uridine(34) in the bound tRNA molecule. Does not show protein lysine acetyltransferase activity. The chain is tRNA uridine(34) acetyltransferase from Methanocaldococcus infernus (strain DSM 11812 / JCM 15783 / ME).